The chain runs to 653 residues: Chaperone protein dnaK3 (653 aa).

At Thr-197 the chain carries Phosphothreonine; by autocatalysis.

The protein belongs to the heat shock protein 70 family.

In terms of biological role, acts as a chaperone. The chain is Chaperone protein dnaK3 (dnaK3) from Nostoc sp. (strain PCC 7120 / SAG 25.82 / UTEX 2576).